Consider the following 247-residue polypeptide: HTH-type transcriptional regulator SarU (247 aa).

2 DNA-binding regions (H-T-H motif) span residues 53 to 76 (LKEIIGDILYKQSDVVKNIKSLSK) and 178 to 201 (LKDLFESIRFMYPQIVRSVNRLNN).

This sequence belongs to the SarA family.

Its subcellular location is the cytoplasm. Positive regulator of RNAII and RNAIII in a cell density-dependent manner. It can contribute to the expression of virulence genes controlled by agr. May also regulate target genes via an agr-independent pathway. In Staphylococcus aureus (strain COL), this protein is HTH-type transcriptional regulator SarU (sarU).